Here is a 168-residue protein sequence, read N- to C-terminus: Peptide methionine sulfoxide reductase 2 (168 aa).

The 129-residue stretch at 40–168 folds into the MsrB domain; that stretch reads DVKWNDALTP…NSASLNLKKD (129 aa). Zn(2+)-binding residues include Cys79, Cys82, Cys128, and Cys131. A disulfide bond links Cys97 and Cys157. The active-site Nucleophile is the Cys157.

Belongs to the MsrB Met sulfoxide reductase family. Zn(2+) serves as cofactor.

It catalyses the reaction L-methionyl-[protein] + [thioredoxin]-disulfide + H2O = L-methionyl-(R)-S-oxide-[protein] + [thioredoxin]-dithiol. In terms of biological role, methionine-R-sulfoxide reductase which catalyzes the reduction of methionine sulfoxide (MetSO) to methionine in proteins. Plays a protective role against oxidative stress by restoring activity to proteins that have been inactivated by methionine oxidation. Protects iron-sulfur clusters from oxidative inactivation along with MXR1. Involved in the regulation of lifespan. The polypeptide is Peptide methionine sulfoxide reductase 2 (MXR2) (Saccharomyces cerevisiae (strain ATCC 204508 / S288c) (Baker's yeast)).